The sequence spans 381 residues: Cyclic AMP-AMP-GMP synthase (381 aa).

ATP-binding residues include Gln51, Ser53, Arg56, Asp69, Asp71, and Arg109. Active-site residues include Asp69 and Asp71. Mg(2+) contacts are provided by Asp69 and Asp71. The active site involves Asp121. Asp121 and Asp196 together coordinate Mg(2+). 7 residues coordinate ATP: Asp196, Arg197, Arg204, Thr205, Gln210, Lys233, and Tyr250. 2 residues coordinate Mg(2+): Asn258 and Leu260. 2 residues coordinate ATP: Val304 and Arg307. The disordered stretch occupies residues 348–381; that stretch reads GSKFPLPGPQGGDRNGGFTTPSKPAEPQKTGRFA.

Belongs to the CD-NTase family. D02 subfamily. As to quaternary structure, monomer. Crystallizes as a Cap2 homodimer bound on each side by a CdnD monomer. Mg(2+) is required as a cofactor. In terms of processing, in bacteria expressing cap4-dncV-cap2-cap3, this protein is conjugated to a number of other proteins by Cap2, probably via this protein's C-terminal Ala residue. More conjugated DncV is found in the absence of Cap3.

It carries out the reaction GTP + 2 ATP = 3',3',3'-cAAG + 3 diphosphate. Its activity is regulated as follows. Primed for activation by Cap2 which conjugates it to cellular proteins; activation is target protein-specific (green fluorescent protein does not activate the enzyme), but which protein(s) activate it is unclear. Cyclic nucleotide synthase (second messenger synthase) of a CBASS antivirus system. CBASS (cyclic oligonucleotide-based antiphage signaling system) provides immunity against bacteriophages. The CD-NTase protein (CdnD, this protein) synthesizes cyclic nucleotides in response to infection; these serve as specific second messenger signals. The signals activate a diverse range of effectors, leading to bacterial cell death and thus abortive phage infection. A type II-C(AAG) CBASS system. Functionally, cyclic trinucleotide synthase that catalyzes the synthesis of 3',3',3'-cyclic AMP-AMP-GMP (cAAG) as the major product, a second messenger for cell signal transduction. Uses ATP as the first donor nucleotide, followed by GTP. Its function is as follows. Protects E.coli against phage T2 infection. When the cdnD-cap2-cap3-cap4 operon is introduced in E.coli there is a more than 10(3) decrease in the efficiency of T2 plaque formation. The operon does not protect against phage T5 and only about 10-fold against T7. Expression of cdnD-cap4 alone protects E.coli against phage T2 infection. The polypeptide is Cyclic AMP-AMP-GMP synthase (Enterobacter hormaechei subsp. hoffmannii (strain UCI 50)).